The primary structure comprises 254 residues: tRNA (guanine-N(1)-)-methyltransferase (254 aa).

Residues G121 and 141–146 (LGDYVL) contribute to the S-adenosyl-L-methionine site.

Belongs to the RNA methyltransferase TrmD family. Homodimer.

The protein resides in the cytoplasm. It catalyses the reaction guanosine(37) in tRNA + S-adenosyl-L-methionine = N(1)-methylguanosine(37) in tRNA + S-adenosyl-L-homocysteine + H(+). In terms of biological role, specifically methylates guanosine-37 in various tRNAs. This chain is tRNA (guanine-N(1)-)-methyltransferase, found in Psychrobacter cryohalolentis (strain ATCC BAA-1226 / DSM 17306 / VKM B-2378 / K5).